We begin with the raw amino-acid sequence, 739 residues long: Xylosyl- and glucuronyltransferase LARGE2s (739 aa).

Residues 1 to 10 (MLCSWRVKLK) are Cytoplasmic-facing. A helical; Signal-anchor for type II membrane protein membrane pass occupies residues 11–31 (LLLATITLAVLLSWLYLFVGS). Topologically, residues 32-739 (LEYGRFLLLP…LKYLTAERNL (708 aa)) are lumenal. The segment at 80-105 (AEGSDGNPQWAASAEDGPPLGGERNN) is disordered. N-linked (GlcNAc...) asparagine glycosylation is found at Asn-105, Asn-131, and Asn-217. A xylosyltransferase activity region spans residues 121 to 396 (LHVAIVCAGH…FLEYDGNLLR (276 aa)). Mn(2+) contacts are provided by Asp-225 and Asp-227. N-linked (GlcNAc...) asparagine glycosylation occurs at Asn-255. The tract at residues 397–739 (RELFGCASLP…LKYLTAERNL (343 aa)) is glucuronyltransferase activity. 2 residues coordinate Mn(2+): Asp-546 and Asp-548.

This sequence in the C-terminal section; belongs to the glycosyltransferase 49 family. It in the N-terminal section; belongs to the glycosyltransferase 8 family. The cofactor is Mn(2+).

The protein localises to the golgi apparatus membrane. It carries out the reaction 3-O-[beta-D-GlcA-(1-&gt;3)-beta-D-Xyl-(1-&gt;4)-Rib-ol-P-Rib-ol-P-3-beta-D-GalNAc-(1-&gt;3)-beta-D-GlcNAc-(1-&gt;4)-(O-6-P-alpha-D-Man)]-Thr-[protein] + UDP-alpha-D-xylose = 3-O-[alpha-D-Xyl-(1-&gt;3)-beta-D-GlcA-(1-&gt;4)-beta-D-Xyl-(1-&gt;4)-Rib-ol-P-Rib-ol-P-3-beta-D-GalNAc-(1-&gt;3)-beta-D-GlcNAc-(1-&gt;4)-(O-6-P-alpha-D-Man)]-Thr-[protein] + UDP + H(+). The enzyme catalyses 3-O-{(1-&gt;[3)-alpha-D-Xyl-(1-&gt;3)-beta-D-GlcA-(1-&gt;](n)-4)-beta-D-Xyl-(1-&gt;4)-Rib-ol-P-Rib-ol-P-3-beta-D-GalNAc-(1-&gt;3)-beta-D-GlcNAc-(1-&gt;4)-O-6-P-alpha-D-Man}-L-Thr-[protein] + UDP-alpha-D-glucuronate = 3-O-{beta-D-GlcA-(1-&gt;[3)-alpha-D-Xyl-(1-&gt;3)-beta-D-GlcA-(1-&gt;](n)-4)-beta-D-Xyl-(1-&gt;4)-Rib-ol-P-Rib-ol-P-3-beta-D-GalNAc-(1-&gt;3)-beta-D-GlcNAc-(1-&gt;4)-O-6-P-alpha-D-Man}-L-Thr-[protein] + UDP + H(+). The catalysed reaction is 3-O-{beta-D-GlcA-(1-&gt;[3)-alpha-D-Xyl-(1-&gt;3)-beta-D-GlcA-(1-&gt;](n)-4)-beta-D-Xyl-(1-&gt;4)-Rib-ol-P-Rib-ol-P-3-beta-D-GalNAc-(1-&gt;3)-beta-D-GlcNAc-(1-&gt;4)-O-6-P-alpha-D-Man}-L-Thr-[protein] + UDP-alpha-D-xylose = 3-O-{(1-&gt;[3)-alpha-D-Xyl-(1-&gt;3)-beta-D-GlcA-(1-&gt;](n+1)-4)-beta-D-Xyl-(1-&gt;4)-Rib-ol-P-Rib-ol-P-3-beta-D-GalNAc-(1-&gt;3)-beta-D-GlcNAc-(1-&gt;4)-O-6-P-alpha-D-Man}-L-Thr-[protein] + UDP + H(+). It participates in protein modification; protein glycosylation. In terms of biological role, bifunctional glycosyltransferase with both alpha-1,3-xylosyltransferase and beta-1,3-glucuronyltransferase activities involved in the maturation of alpha-dystroglycan (DAG1) by glycosylation leading to DAG1 binding to laminin G-like domain-containing extracellular proteins with high affinity and in a phosphorylated-O-mannosyl trisaccharide dependent manner. Elongates the glucuronyl-beta-1,4-xylose-beta disaccharide primer structure by adding repeating units [-3-Xylose-alpha-1,3-GlcA-beta-1-] to produce a heteropolysaccharide. Supports the maturation of DAG1 more effectively than LARGE1. In addition, can modify both heparan sulfate (HS)- and chondroitin/dermatan sulfate (CS/DS)-proteoglycans (PGs), namely GPC4, with a glycosaminoglycan (GAG)-like polysaccharide composed of xylose and glucuronic acid to confer laminin binding. This is Xylosyl- and glucuronyltransferase LARGE2s from Gallus gallus (Chicken).